A 504-amino-acid chain; its full sequence is Peroxisome proliferator-activated receptor gamma (504 aa).

A Phosphoserine; by MAPK modification is found at Ser-111. Positions 135–209 (AIECRVCGDK…VGMSHNAIRF (75 aa)) form a DNA-binding region, nuclear receptor. NR C4-type zinc fingers lie at residues 138 to 158 (CRVC…CEGC) and 175 to 197 (CDLN…FQKC). Residues 204 to 279 (HNAIRFGRMP…DKSPFVIYDM (76 aa)) are interaction with FAM120B. The NR LBD domain occupies 237-502 (DLRALAKHLY…HPLLQEIYKD (266 aa)). Lys-251 is covalently cross-linked (Glycyl lysine isopeptide (Lys-Gly) (interchain with G-Cter in ubiquitin)). Positions 494–502 (PLLQEIYKD) match the 9aaTAD motif.

The protein belongs to the nuclear hormone receptor family. NR1 subfamily. As to quaternary structure, interacts with FOXO1 (acetylated form). Heterodimer with other nuclear receptors, such as RXRA. The heterodimer with the retinoic acid receptor RXRA is called adipocyte-specific transcription factor ARF6. Interacts with NCOA6 coactivator, leading to a strong increase in transcription of target genes. Interacts with coactivator PPARBP, leading to a mild increase in transcription of target genes. Interacts with NOCA7 in a ligand-inducible manner. Interacts with NCOA1 and NCOA2 LXXLL motifs. Interacts with ASXL1, ASXL2, DNTTIP2, FAM120B, MAP2K1/MEK1, NR0B2, PDPK1, PRDM16, PRMT2 and TGFB1I1. Interacts (when activated by agonist) with PPP5C. Interacts with HELZ2 and THRAP3; the interaction stimulates the transcriptional activity of PPARG. Interacts with PER2, the interaction is ligand dependent and blocks PPARG recruitment to target promoters. Interacts with NOCT. Interacts with ACTN4. Interacts (when in the liganded conformation) with GPS2. Interacts with CRY1 and CRY2 in a ligand-dependent manner. In the absence of hormonal ligand, interacts with TACC1. In macrophages, interacts with PAQR3 and STUB1; the interactions promote PPARG poylubiquitination and STUB1-mediated degradation. Phosphorylated at basal conditions and dephosphorylated when treated with the ligand. May be dephosphorylated by PPP5C. The phosphorylated form may be inactive and dephosphorylation induces adipogenic activity. Post-translationally, ubiquitinated by E3 ubiquitin-protein ligase complex containing FBXO9; leading to proteasomal degradation. Ubiquitinated at Lys-251 by TRIM55 leading to proteasomal degradation. Ubiquitinated by E3 ubiquitin-protein ligase STUB1/CHIP; leading to proteasomal degradation. As to expression, highest expression in adipose tissue and lower in spleen. Very low levels in kidney, intestine, lung and muscle.

The protein localises to the nucleus. It localises to the cytoplasm. With respect to regulation, PDPK1 activates its transcriptional activity independently of its kinase activity. Functionally, nuclear receptor that binds peroxisome proliferators such as hypolipidemic drugs and fatty acids. Once activated by a ligand, the nuclear receptor binds to DNA specific PPAR response elements (PPRE) and modulates the transcription of its target genes, such as acyl-CoA oxidase. It therefore controls the peroxisomal beta-oxidation pathway of fatty acids. Key regulator of adipocyte differentiation and glucose homeostasis. ARF6 acts as a key regulator of the tissue-specific adipocyte P2 (aP2) enhancer. Acts as a critical regulator of gut homeostasis by suppressing NF-kappa-B-mediated pro-inflammatory responses. Plays a role in the regulation of cardiovascular circadian rhythms by regulating the transcription of BMAL1 in the blood vessels. This chain is Peroxisome proliferator-activated receptor gamma (PPARG), found in Sus scrofa (Pig).